A 93-amino-acid chain; its full sequence is Protein 6 (93 aa).

The segment covering 1–16 (MSSQQETNDKSNTQGH) has biased composition (polar residues). Residues 1–52 (MSSQQETNDKSNTQGHPETDPEGKTGTDTGNTEDSPPDTDNVPITDDAIMDD) are disordered.

It localises to the virion. In Rice yellow stunt virus (RYSV), this protein is Protein 6 (6).